The sequence spans 129 residues: Small ribosomal subunit protein uS11 (129 aa).

Belongs to the universal ribosomal protein uS11 family. Part of the 30S ribosomal subunit. Interacts with proteins S7 and S18. Binds to IF-3.

Functionally, located on the platform of the 30S subunit, it bridges several disparate RNA helices of the 16S rRNA. Forms part of the Shine-Dalgarno cleft in the 70S ribosome. This Bacillus cereus (strain ATCC 14579 / DSM 31 / CCUG 7414 / JCM 2152 / NBRC 15305 / NCIMB 9373 / NCTC 2599 / NRRL B-3711) protein is Small ribosomal subunit protein uS11.